Consider the following 239-residue polypeptide: Ribonuclease Le2 (239 aa).

Intrachain disulfides connect cysteine 5-cysteine 22, cysteine 13-cysteine 58, cysteine 21-cysteine 126, cysteine 66-cysteine 118, and cysteine 191-cysteine 225. Catalysis depends on residues histidine 51, glutamate 111, and histidine 115.

Belongs to the RNase T2 family.

It catalyses the reaction a ribonucleotidyl-ribonucleotide-RNA + H2O = a 3'-end 3'-phospho-ribonucleotide-RNA + a 5'-end dephospho-ribonucleoside-RNA + H(+). This is a base non-specific and adenylic acid preferential ribonuclease. In Lentinula edodes (Shiitake mushroom), this protein is Ribonuclease Le2.